Here is a 983-residue protein sequence, read N- to C-terminus: Ephrin type-A receptor 3 (983 aa).

An N-terminal signal peptide occupies residues 1 to 20; it reads MDCQLSILLLLSCSVLDSFG. Residues 21 to 541 lie on the Extracellular side of the membrane; it reads ELIPQPSNEV…SFSISGESSQ (521 aa). The Eph LBD domain occupies 29–207; sequence EVNLLDSKTI…YFKKCPFTVK (179 aa). N-linked (GlcNAc...) asparagine glycans are attached at residues Asn-232, Asn-337, Asn-391, Asn-404, and Asn-493. Fibronectin type-III domains are found at residues 325–435 and 436–531; these read PPSS…TNQA and APSP…TSPD. A helical transmembrane segment spans residues 542-565; it reads VVMIAISAAVAIILLTVVIYVLIG. Over 566–983 the chain is Cytoplasmic; that stretch reads RFCGYKSKHG…TQSKNGPVPV (418 aa). A phosphotyrosine; by autocatalysis mark is found at Tyr-596 and Tyr-602. The region spanning 621–882 is the Protein kinase domain; it reads ISIDKVVGAG…QIVSILDKLI (262 aa). ATP contacts are provided by residues 628–633, Lys-653, and 700–706; these read GAGEFG and EYMENGS. Tyr-701 is subject to Phosphotyrosine; by autocatalysis. Asp-746 (proton acceptor) is an active-site residue. 750–751 is a binding site for ATP; that stretch reads RN. Phosphotyrosine; by autocatalysis is present on Tyr-779. In terms of domain architecture, SAM spans 911-975; the sequence is TTFRTTGDWL…ISSIKALETQ (65 aa). Tyr-937 carries the phosphotyrosine modification. The PDZ-binding signature appears at 981-983; the sequence is VPV.

Belongs to the protein kinase superfamily. Tyr protein kinase family. Ephrin receptor subfamily. In terms of assembly, heterotetramer upon binding of the ligand. The heterotetramer is composed of an ephrin dimer and a receptor dimer. Oligomerization is probably required to induce biological responses. Forms a ternary EFNA5-EPHA3-ADAM10 complex mediating EFNA5 extracellular domain shedding by ADAM10 which regulates the EFNA5-EPHA3 complex internalization and function. Interacts with NCK1 (via SH2 domain); mediates EFNA5-EPHA3 signaling. Interacts (phosphorylated) with PTPN1; dephosphorylates EPHA3 and may regulate its trafficking and function. Interacts (phosphorylated) with CRK; mediates EFNA5-EPHA3 signaling through RHOA GTPase activation. Autophosphorylates upon activation by EFNA5. Phosphorylation on Tyr-602 mediates interaction with NCK1. Dephosphorylated by PTPN1. In terms of tissue distribution, widely expressed. Highest level in placenta.

It localises to the cell membrane. The protein localises to the secreted. It carries out the reaction L-tyrosyl-[protein] + ATP = O-phospho-L-tyrosyl-[protein] + ADP + H(+). In terms of biological role, receptor tyrosine kinase which binds promiscuously membrane-bound ephrin family ligands residing on adjacent cells, leading to contact-dependent bidirectional signaling into neighboring cells. The signaling pathway downstream of the receptor is referred to as forward signaling while the signaling pathway downstream of the ephrin ligand is referred to as reverse signaling. Highly promiscuous for ephrin-A ligands it binds preferentially EFNA5. Upon activation by EFNA5 regulates cell-cell adhesion, cytoskeletal organization and cell migration. Plays a role in cardiac cells migration and differentiation and regulates the formation of the atrioventricular canal and septum during development probably through activation by EFNA1. Involved in the retinotectal mapping of neurons. May also control the segregation but not the guidance of motor and sensory axons during neuromuscular circuit development. This chain is Ephrin type-A receptor 3 (EPHA3), found in Homo sapiens (Human).